The following is a 302-amino-acid chain: Nudix hydrolase 5 (302 aa).

A Nudix hydrolase domain is found at 122–254; it reads SHRIGIGAFV…EGNEMFKLIA (133 aa). The Nudix box motif lies at 159–180; sequence GTIKEGESIWAGAVREVKEETD. Mg(2+) is bound by residues glutamate 174 and glutamate 178.

It belongs to the Nudix hydrolase family. It depends on Mg(2+) as a cofactor. The cofactor is Mn(2+). As to expression, expressed in roots, stems and leaves.

In terms of biological role, probably mediates the hydrolysis of some nucleoside diphosphate derivatives. This chain is Nudix hydrolase 5 (NUDT5), found in Arabidopsis thaliana (Mouse-ear cress).